Here is a 69-residue protein sequence, read N- to C-terminus: Beta-defensin 1 (69 aa).

The signal sequence occupies residues 1–21 (MKTHYFLLVMICFLFSQMEPG). The propeptide occupies 22 to 32 (VGILTSLGRRT). 3 disulfides stabilise this stretch: Cys37-Cys66, Cys44-Cys59, and Cys49-Cys67.

The protein belongs to the beta-defensin family. Monomer. Homodimer. In terms of tissue distribution, detected in kidney.

The protein resides in the secreted. It localises to the membrane. Functionally, has bactericidal activity. May act as a ligand for C-C chemokine receptor CCR6. Positively regulates the sperm motility and bactericidal activity in a CCR6-dependent manner. Binds to CCR6 and triggers Ca2+ mobilization in the sperm which is important for its motility. This is Beta-defensin 1 (Defb1) from Mus musculus (Mouse).